A 202-amino-acid polypeptide reads, in one-letter code: Urease accessory protein UreG (202 aa).

13–20 (GPVGAGKT) provides a ligand contact to GTP.

It belongs to the SIMIBI class G3E GTPase family. UreG subfamily. As to quaternary structure, homodimer. UreD, UreF and UreG form a complex that acts as a GTP-hydrolysis-dependent molecular chaperone, activating the urease apoprotein by helping to assemble the nickel containing metallocenter of UreC. The UreE protein probably delivers the nickel.

The protein resides in the cytoplasm. Facilitates the functional incorporation of the urease nickel metallocenter. This process requires GTP hydrolysis, probably effectuated by UreG. This is Urease accessory protein UreG from Dinoroseobacter shibae (strain DSM 16493 / NCIMB 14021 / DFL 12).